A 484-amino-acid chain; its full sequence is Probable cytosol aminopeptidase (484 aa).

Mn(2+) contacts are provided by Lys256 and Asp261. Lys268 is an active-site residue. Asp279, Asp338, and Glu340 together coordinate Mn(2+). The active site involves Arg342.

It belongs to the peptidase M17 family. The cofactor is Mn(2+).

The protein localises to the cytoplasm. It catalyses the reaction Release of an N-terminal amino acid, Xaa-|-Yaa-, in which Xaa is preferably Leu, but may be other amino acids including Pro although not Arg or Lys, and Yaa may be Pro. Amino acid amides and methyl esters are also readily hydrolyzed, but rates on arylamides are exceedingly low.. The enzyme catalyses Release of an N-terminal amino acid, preferentially leucine, but not glutamic or aspartic acids.. In terms of biological role, presumably involved in the processing and regular turnover of intracellular proteins. Catalyzes the removal of unsubstituted N-terminal amino acids from various peptides. This chain is Probable cytosol aminopeptidase, found in Actinobacillus succinogenes (strain ATCC 55618 / DSM 22257 / CCUG 43843 / 130Z).